The chain runs to 219 residues: Ribosome maturation factor RimP (219 aa).

The interval 195 to 219 is disordered; that stretch reads EGRIPGDDLGAEPEDAASTETQEKK.

Belongs to the RimP family.

It is found in the cytoplasm. Required for maturation of 30S ribosomal subunits. In Brucella melitensis biotype 2 (strain ATCC 23457), this protein is Ribosome maturation factor RimP.